We begin with the raw amino-acid sequence, 1207 residues long: MAFASSSSSIVLSKCEFDVFVSFRGADTRHDFTSHLVKYLRGKGIDVFSDAKLRGGEYISLLFDRIEQSKMSIVVFSEDYANSWWCLEEVGKIMQRRKEFNHGVLPIFYKVSKSDVSNQTGSFEAVFQSPTKIFNGDEQKIEELKVALKTASNIRGFVYPENSSEPDFLDEIVKNTFRMLNELSPCVIPDDLPGIESRSKELEKLLMFDNDECVRVVGVLGMTGIGKTTVADIVYKQNFQRFDGYEFLEDIEDNSKRYGLPYLYQKLLHKLLDGENVDVRAQGRPENFLRNKKLFIVLDNVTEEKQIEYLIGKKNVYRQGSRIVIITRDKKLLQKNADATYVVPRLNDREAMELFCLQVFGNHYPTEEFVDLSNDFVCYAKGLPLALKLLGKGLLTHDINYWKKKLEFLQVNPDKELQKELKSSYKALDDDQKSVFLDIACFFRSEKADFVSSILKSDDIDAKDVMRELEEKCLVTISYDRIEMHDLLHAMGKEIGKEKSIRKAGERRRLWNHKDIRDILEHNTGTECVRGIFLNMSEVRRIKLFPAAFTMLSKLKFLKFHSSHCSQWCDNDHIFQCSKVPDHFPDELVYLHWQGYPYDCLPSDFDPKELVDLSLRYSHIKQLWEDEKNTESLRWVDLGQSKDLLNLSGLSRAKNLERLDLEGCTSLDLLGSVKQMNELIYLNLRDCTSLESLPKGFKIKSLKTLILSGCLKLKDFHIISESIESLHLEGTAIERVVEHIESLHSLILLNLKNCEKLKYLPNDLYKLKSLQELVLSGCSALESLPPIKEKMECLEILLMDGTSIKQTPEMSCLSNLKICSFCRPVIDDSTGLVVLPFSGNSFLSDLYLTNCNIDKLPDKFSSLRSLRCLCLSRNNIETLPESIEKLYSLLLLDLKHCCRLKSLPLLPSNLQYLDAHGCGSLENVSKPLTIPLVTERMHTTFIFTDCFKLNQAEKEDIVAQAQLKSQLLARTSRHHNHKGLLLDPLVAVCFPGHDIPSWFSHQKMGSLIETDLLPHWCNSKFIGASLCVVVTFKDHEGHHANRLSVRCKSKFKSQNGQFISFSFCLGGWNESCGSSCHEPRKLGSDHVFISYNNCNVPVFKWSEETNEGNRCHPTSASFEFYLTDETERKLECCEILRCGMNFLYARDENDRKFQGIRVTDTVERTSSEALVTIRGQSHSRIEERRYGRIRDEIMDMTGSSMIGGPES.

A TIR domain is found at 15-180; the sequence is CEFDVFVSFR…EIVKNTFRML (166 aa). Residue E89 is part of the active site. The region spanning 201-445 is the NB-ARC domain; sequence ELEKLLMFDN…FLDIACFFRS (245 aa). LRR repeat units lie at residues 607 to 630, 653 to 676, 677 to 699, 720 to 743, 744 to 767, 769 to 791, 792 to 815, 840 to 862, and 863 to 886; these read PKEL…EKNT, AKNL…VKQM, NELI…GFKI, SESI…IESL, HSLI…LYKL, SLQE…KEKM, ECLE…CLSN, NSFL…KFSS, and LRSL…IEKL.

It belongs to the disease resistance TIR-NB-LRR family.

The catalysed reaction is NAD(+) + H2O = ADP-D-ribose + nicotinamide + H(+). In terms of biological role, disease resistance protein that cooperates with RPP2A to confer resistance to Hyaloperonospora parasitica isolate Cala2. The chain is Disease resistance protein RPP2B from Arabidopsis thaliana (Mouse-ear cress).